We begin with the raw amino-acid sequence, 160 residues long: Large ribosomal subunit protein eL21 (160 aa).

Basic and acidic residues-rich tracts occupy residues 112–123 (NDQKKKEAKEKG) and 136–146 (REAHFVRTNGK). Residues 112 to 146 (NDQKKKEAKEKGTWVQLNGQPAPPREAHFVRTNGK) are disordered.

It belongs to the eukaryotic ribosomal protein eL21 family. Component of the large ribosomal subunit.

It localises to the cytoplasm. Its subcellular location is the cytosol. It is found in the endoplasmic reticulum. Component of the large ribosomal subunit. The ribosome is a large ribonucleoprotein complex responsible for the synthesis of proteins in the cell. The protein is Large ribosomal subunit protein eL21 (Rpl21) of Rattus norvegicus (Rat).